The chain runs to 260 residues: Type III pantothenate kinase (260 aa).

Asp-6 to Thr-13 is a binding site for ATP. Residue Gly-107 to Arg-110 participates in substrate binding. Asp-109 (proton acceptor) is an active-site residue. K(+) is bound at residue Asp-129. Thr-132 serves as a coordination point for ATP. Thr-184 provides a ligand contact to substrate.

This sequence belongs to the type III pantothenate kinase family. In terms of assembly, homodimer. Requires NH4(+) as cofactor. The cofactor is K(+).

The protein resides in the cytoplasm. It carries out the reaction (R)-pantothenate + ATP = (R)-4'-phosphopantothenate + ADP + H(+). It participates in cofactor biosynthesis; coenzyme A biosynthesis; CoA from (R)-pantothenate: step 1/5. Catalyzes the phosphorylation of pantothenate (Pan), the first step in CoA biosynthesis. The sequence is that of Type III pantothenate kinase from Agathobacter rectalis (strain ATCC 33656 / DSM 3377 / JCM 17463 / KCTC 5835 / VPI 0990) (Eubacterium rectale).